Here is a 218-residue protein sequence, read N- to C-terminus: Small ribosomal subunit protein uS5 (218 aa).

Positions 1 to 10 are enriched in polar residues; it reads MTQATNQTPG. Positions 1–63 are disordered; the sequence is MTQATNQTPG…GRDERDSEWQ (63 aa). Residues 11–25 are compositionally biased toward low complexity; the sequence is QDVPGAADVPAAAEG. Residues 31–63 are compositionally biased toward basic and acidic residues; the sequence is GERRGGGGGRGGDRRGRGDRRGRGRDERDSEWQ. An S5 DRBM domain is found at 62 to 125; the sequence is WQERVIQIRR…ADGKKHLVKV (64 aa).

This sequence belongs to the universal ribosomal protein uS5 family. In terms of assembly, part of the 30S ribosomal subunit. Contacts proteins S4 and S8.

Its function is as follows. With S4 and S12 plays an important role in translational accuracy. Located at the back of the 30S subunit body where it stabilizes the conformation of the head with respect to the body. This Synechococcus sp. (strain RCC307) protein is Small ribosomal subunit protein uS5.